A 240-amino-acid polypeptide reads, in one-letter code: Urease accessory protein UreF (240 aa).

The protein belongs to the UreF family. UreD, UreF and UreG form a complex that acts as a GTP-hydrolysis-dependent molecular chaperone, activating the urease apoprotein by helping to assemble the nickel containing metallocenter of UreC. The UreE protein probably delivers the nickel.

Its subcellular location is the cytoplasm. Functionally, required for maturation of urease via the functional incorporation of the urease nickel metallocenter. The polypeptide is Urease accessory protein UreF (Rhodopseudomonas palustris (strain TIE-1)).